A 58-amino-acid chain; its full sequence is Small ribosomal subunit protein bS21 (58 aa).

The protein belongs to the bacterial ribosomal protein bS21 family.

The chain is Small ribosomal subunit protein bS21 from Lactobacillus acidophilus (strain ATCC 700396 / NCK56 / N2 / NCFM).